The primary structure comprises 128 residues: Large ribosomal subunit protein bL20 (128 aa).

The protein belongs to the bacterial ribosomal protein bL20 family.

In terms of biological role, binds directly to 23S ribosomal RNA and is necessary for the in vitro assembly process of the 50S ribosomal subunit. It is not involved in the protein synthesizing functions of that subunit. This Micrococcus luteus (strain ATCC 4698 / DSM 20030 / JCM 1464 / CCM 169 / CCUG 5858 / IAM 1056 / NBRC 3333 / NCIMB 9278 / NCTC 2665 / VKM Ac-2230) (Micrococcus lysodeikticus) protein is Large ribosomal subunit protein bL20.